The primary structure comprises 348 residues: Dihydroorotase (348 aa).

Residues histidine 17 and histidine 19 each coordinate Zn(2+). Substrate is bound by residues 19 to 21 and asparagine 45; that span reads HLR. Positions 103, 140, and 178 each coordinate Zn(2+). Lysine 103 is modified (N6-carboxylysine). Residue histidine 140 participates in substrate binding. Substrate is bound at residue leucine 223. Aspartate 251 serves as a coordination point for Zn(2+). Residue aspartate 251 is part of the active site. Substrate contacts are provided by histidine 255 and alanine 267.

This sequence belongs to the metallo-dependent hydrolases superfamily. DHOase family. Class II DHOase subfamily. In terms of assembly, homodimer. It depends on Zn(2+) as a cofactor.

The catalysed reaction is (S)-dihydroorotate + H2O = N-carbamoyl-L-aspartate + H(+). It functions in the pathway pyrimidine metabolism; UMP biosynthesis via de novo pathway; (S)-dihydroorotate from bicarbonate: step 3/3. In terms of biological role, catalyzes the reversible cyclization of carbamoyl aspartate to dihydroorotate. The polypeptide is Dihydroorotase (Shigella sonnei (strain Ss046)).